The chain runs to 81 residues: Small ribosomal subunit protein bS18 (81 aa).

Belongs to the bacterial ribosomal protein bS18 family. In terms of assembly, part of the 30S ribosomal subunit. Forms a tight heterodimer with protein bS6.

In terms of biological role, binds as a heterodimer with protein bS6 to the central domain of the 16S rRNA, where it helps stabilize the platform of the 30S subunit. In Rubrobacter xylanophilus (strain DSM 9941 / JCM 11954 / NBRC 16129 / PRD-1), this protein is Small ribosomal subunit protein bS18.